We begin with the raw amino-acid sequence, 223 residues long: Probable Ras-related protein Rab-4A (223 aa).

16 to 23 (GNAGTGKT) is a GTP binding site. The Effector region motif lies at 38–46 (TQHTIGAEF). GTP contacts are provided by residues 64 to 68 (DTAGQ) and 122 to 125 (NKKD). 2 S-geranylgeranyl cysteine lipidation sites follow: Cys221 and Cys223. The residue at position 223 (Cys223) is a Cysteine methyl ester.

It belongs to the small GTPase superfamily. Rab family.

Its subcellular location is the cell membrane. In terms of biological role, protein transport. Probably involved in vesicular traffic. The chain is Probable Ras-related protein Rab-4A from Echinococcus multilocularis (Fox tapeworm).